The primary structure comprises 184 residues: Gremlin-1 (184 aa).

A signal peptide spans 1–24 (MNRTAYTVGALLLLLGTLLPAAEG). Asn-2 and Asn-42 each carry an N-linked (GlcNAc...) asparagine glycan. A disordered region spans residues 24-78 (GKKKGSQGAIPPPDKAQHNDSEQTQSPPQPGSRTRGRGQGRGTAMPGEEVLESSQ). Cystine bridges form between Cys-94/Cys-144, Cys-108/Cys-158, Cys-118/Cys-176, and Cys-122/Cys-178. Residues 94 to 184 (CKTQPLKQTI…QCRCISIDLD (91 aa)) enclose the CTCK domain.

It belongs to the DAN family. Homodimer; can also form homooligomers. Interacts with BMP2; can form higher oligomers with BMP2. Interacts with SLIT1 and SLIT2 in a glycosylation-dependent manner. In terms of tissue distribution, highly expressed in the brain, kidney, spleen, and testis and weakly expressed in the lung and liver. Predominantly expressed in differentiated cells as neurons in brain, type I cells in lung and globlet cells in intestine.

The protein resides in the secreted. Its function is as follows. Cytokine that may play an important role during carcinogenesis and metanephric kidney organogenesis, as a BMP antagonist required for early limb outgrowth and patterning in maintaining the FGF4-SHH feedback loop. Down-regulates the BMP4 signaling in a dose-dependent manner. Antagonist of BMP2; inhibits BMP2-mediated differentiation of osteoblasts (in vitro). Acts as inhibitor of monocyte chemotaxis. Can inhibit the growth or viability of normal cells but not transformed cells when is overexpressed. This Rattus norvegicus (Rat) protein is Gremlin-1 (Grem1).